The sequence spans 354 residues: (R,R)-butanediol dehydrogenase (354 aa).

Positions 10 to 350 constitute an Enoyl reductase (ER) domain; sequence GDIRIEDIPE…NNESAVKIIV (341 aa). 3 residues coordinate Zn(2+): Cys37, His71, and Glu157.

It belongs to the zinc-containing alcohol dehydrogenase family. Zn(2+) is required as a cofactor.

The enzyme catalyses (R,R)-butane-2,3-diol + NAD(+) = (R)-acetoin + NADH + H(+). It carries out the reaction (S)-acetoin + NAD(+) = diacetyl + NADH + H(+). NAD-dependent butanediol dehydrogenase which catalyzes the oxidation of (R,R)-butane-2,3-diol to (3R)-acetoin and of meso-butane-2,3-diol to (3S)-acetoin. Preferentially oxidizes (R,R)-butane-2,3-diol, with a catalytic efficiency approximately fourfold higher than with meso-butane-2,3-diol. Shows a very low activity with (S,S)-butane-2,3-diol. Can also catalyze the reduction of (3R/3S)-acetoin and diacetyl in the presence of NADH. This is (R,R)-butanediol dehydrogenase from Neisseria gonorrhoeae (strain ATCC 700825 / FA 1090).